Here is a 232-residue protein sequence, read N- to C-terminus: Large ribosomal subunit protein uL1 (232 aa).

This sequence belongs to the universal ribosomal protein uL1 family. Part of the 50S ribosomal subunit.

Binds directly to 23S rRNA. The L1 stalk is quite mobile in the ribosome, and is involved in E site tRNA release. In terms of biological role, protein L1 is also a translational repressor protein, it controls the translation of the L11 operon by binding to its mRNA. In Coxiella burnetii (strain RSA 331 / Henzerling II), this protein is Large ribosomal subunit protein uL1.